A 399-amino-acid chain; its full sequence is MSKEKIAIAYSGGLDTSVMIKWLKDKYDADIVAVTGNLGQQKEIENLESKALATGASSFHFVDLRTEFVEEYIWRALKAGALYEDVYPLATALGRPLLAKALVDVAVAENCTMLAHGCTGKGNDQVRFEVTFASLAPHMKILAPLRVWEFTSREAEIAYAMEHNIPVSATKKNPYSVDENIWGISIECGVLEDPMIAPPEDAYQITTSPEKAPDTPAVVELEFVEGVPVAMDGKKMNGLDIIVQLNTIGAAHGIGRLDMIENRVVGIKSREIYEAPAATILHFAHRELERLTLEKSVFQYKKNISQDYANIIYNGTWFSPLRTSLDAFVNETQKPVTGLVRLKLYKGNVTLLGRTSPYSLYNEALATYTEADTFNHKAAEGFIHLYGLGLKTFNQIHKG.

Residue 9-17 (AYSGGLDTS) participates in ATP binding. Tyr87 contributes to the L-citrulline binding site. Gly117 provides a ligand contact to ATP. L-aspartate contacts are provided by Thr119, Asn123, and Asp124. Residue Asn123 participates in L-citrulline binding. L-citrulline-binding residues include Arg127, Ser176, Ser185, Glu261, and Tyr273.

The protein belongs to the argininosuccinate synthase family. Type 1 subfamily. As to quaternary structure, homotetramer.

Its subcellular location is the cytoplasm. It carries out the reaction L-citrulline + L-aspartate + ATP = 2-(N(omega)-L-arginino)succinate + AMP + diphosphate + H(+). It participates in amino-acid biosynthesis; L-arginine biosynthesis; L-arginine from L-ornithine and carbamoyl phosphate: step 2/3. The polypeptide is Argininosuccinate synthase (Chlorobium chlorochromatii (strain CaD3)).